The following is a 35-amino-acid chain: Photosystem II reaction center protein T (35 aa).

Residues 3 to 23 (ALVYTFLLVSTLGIIFFAIFF) form a helical membrane-spanning segment.

It belongs to the PsbT family. As to quaternary structure, PSII is composed of 1 copy each of membrane proteins PsbA, PsbB, PsbC, PsbD, PsbE, PsbF, PsbH, PsbI, PsbJ, PsbK, PsbL, PsbM, PsbT, PsbY, PsbZ, Psb30/Ycf12, at least 3 peripheral proteins of the oxygen-evolving complex and a large number of cofactors. It forms dimeric complexes.

Its subcellular location is the plastid. It is found in the chloroplast thylakoid membrane. In terms of biological role, found at the monomer-monomer interface of the photosystem II (PS II) dimer, plays a role in assembly and dimerization of PSII. PSII is a light-driven water plastoquinone oxidoreductase, using light energy to abstract electrons from H(2)O, generating a proton gradient subsequently used for ATP formation. The chain is Photosystem II reaction center protein T from Oenothera argillicola (Appalachian evening primrose).